We begin with the raw amino-acid sequence, 375 residues long: Chaperone protein DnaJ (375 aa).

A J domain is found at 5 to 70 (DYYEVLGVAR…NKRRAYDAHG (66 aa)). The CR-type zinc finger occupies 131-208 (GIERRIEIPT…CHGAGRVEED (78 aa)). Residues cysteine 144, cysteine 147, cysteine 160, cysteine 163, cysteine 182, cysteine 185, cysteine 196, and cysteine 199 each coordinate Zn(2+). CXXCXGXG motif repeat units lie at residues 144-151 (CAPCHGSG), 160-167 (CGTCHGRG), 182-189 (CPHCDGRG), and 196-203 (CKTCHGAG).

It belongs to the DnaJ family. Homodimer. Zn(2+) serves as cofactor.

The protein localises to the cytoplasm. Participates actively in the response to hyperosmotic and heat shock by preventing the aggregation of stress-denatured proteins and by disaggregating proteins, also in an autonomous, DnaK-independent fashion. Unfolded proteins bind initially to DnaJ; upon interaction with the DnaJ-bound protein, DnaK hydrolyzes its bound ATP, resulting in the formation of a stable complex. GrpE releases ADP from DnaK; ATP binding to DnaK triggers the release of the substrate protein, thus completing the reaction cycle. Several rounds of ATP-dependent interactions between DnaJ, DnaK and GrpE are required for fully efficient folding. Also involved, together with DnaK and GrpE, in the DNA replication of plasmids through activation of initiation proteins. In Xanthomonas axonopodis pv. citri (strain 306), this protein is Chaperone protein DnaJ.